Here is a 240-residue protein sequence, read N- to C-terminus: Phosducin-like protein 3 (240 aa).

Met1 carries the N-acetylmethionine modification. Positions Lys27–Gly181 constitute a Phosducin domain. Residues Ser44, Ser65, Ser235, and Ser237 each carry the phosphoserine modification. Residues Phe92–Asp240 are thioredoxin fold.

The protein belongs to the phosducin family. Interacts (via thioredoxin fold region) with KDR/VEGFR2 (via juxtamembrane domain). Forms ternary complexes with the chaperonin CCT complex and actin substrate, leading to inhibition of actin folding. Interacts with XIAP (via BIR 3 and RING domain). Interacts with HSP90AA1 and HSP90AB1. Post-translationally, N-terminal methionine acetylation destabilizes the protein. Expressed in blood vessels (at protein level).

It localises to the cytoplasm. The protein resides in the perinuclear region. The protein localises to the endoplasmic reticulum. In terms of biological role, acts as a chaperone for the angiogenic VEGF receptor KDR/VEGFR2, increasing its abundance by inhibiting its ubiquitination and degradation. Inhibits the folding activity of the chaperonin-containing T-complex (CCT) which leads to inhibition of cytoskeletal actin folding. Acts as a chaperone during heat shock alongside HSP90 and HSP40/70 chaperone complexes. Modulates the activation of caspases during apoptosis. The polypeptide is Phosducin-like protein 3 (Pdcl3) (Mus musculus (Mouse)).